The primary structure comprises 245 residues: Probable phosphatase YcdX (245 aa).

Histidine 7, histidine 9, histidine 15, histidine 40, glutamate 73, histidine 101, histidine 131, aspartate 192, and histidine 194 together coordinate Zn(2+).

It belongs to the PHP family. In terms of assembly, homotrimer. It depends on Zn(2+) as a cofactor.

The protein is Probable phosphatase YcdX of Salmonella agona (strain SL483).